Reading from the N-terminus, the 126-residue chain is Glycine cleavage system H protein (126 aa).

The Lipoyl-binding domain maps to 22–104; it reads VATIGITEYA…YEKAWMVKIE (83 aa). The residue at position 63 (K63) is an N6-lipoyllysine.

It belongs to the GcvH family. The glycine cleavage system is composed of four proteins: P, T, L and H. (R)-lipoate is required as a cofactor.

Functionally, the glycine cleavage system catalyzes the degradation of glycine. The H protein shuttles the methylamine group of glycine from the P protein to the T protein. Its function is as follows. Is also involved in protein lipoylation via its role as an octanoyl/lipoyl carrier protein intermediate. The polypeptide is Glycine cleavage system H protein (Staphylococcus epidermidis (strain ATCC 35984 / DSM 28319 / BCRC 17069 / CCUG 31568 / BM 3577 / RP62A)).